Consider the following 297-residue polypeptide: Homoserine kinase (297 aa).

Residue 82-92 participates in ATP binding; the sequence is PVSRGLGSSAA.

The protein belongs to the GHMP kinase family. Homoserine kinase subfamily.

It localises to the cytoplasm. The enzyme catalyses L-homoserine + ATP = O-phospho-L-homoserine + ADP + H(+). The protein operates within amino-acid biosynthesis; L-threonine biosynthesis; L-threonine from L-aspartate: step 4/5. Its function is as follows. Catalyzes the ATP-dependent phosphorylation of L-homoserine to L-homoserine phosphate. This Clostridium botulinum (strain ATCC 19397 / Type A) protein is Homoserine kinase.